The sequence spans 337 residues: Methionine import ATP-binding protein MetN (337 aa).

An ABC transporter domain is found at isoleucine 4–valine 240. Glycine 37–serine 44 provides a ligand contact to ATP.

Belongs to the ABC transporter superfamily. Methionine importer (TC 3.A.1.24) family. In terms of assembly, the complex is composed of two ATP-binding proteins (MetN), two transmembrane proteins (MetI) and a solute-binding protein (MetQ).

The protein localises to the cell membrane. It catalyses the reaction L-methionine(out) + ATP + H2O = L-methionine(in) + ADP + phosphate + H(+). The enzyme catalyses D-methionine(out) + ATP + H2O = D-methionine(in) + ADP + phosphate + H(+). Its function is as follows. Part of the ABC transporter complex MetNIQ involved in methionine import. Responsible for energy coupling to the transport system. The sequence is that of Methionine import ATP-binding protein MetN from Carboxydothermus hydrogenoformans (strain ATCC BAA-161 / DSM 6008 / Z-2901).